The sequence spans 415 residues: Serine hydroxymethyltransferase (415 aa).

Residues Leu-117 and 121-123 (GHL) each bind (6S)-5,6,7,8-tetrahydrofolate. An N6-(pyridoxal phosphate)lysine modification is found at Lys-226. Position 241 (Glu-241) interacts with (6S)-5,6,7,8-tetrahydrofolate.

Belongs to the SHMT family. As to quaternary structure, homodimer. Pyridoxal 5'-phosphate serves as cofactor.

It localises to the cytoplasm. The enzyme catalyses (6R)-5,10-methylene-5,6,7,8-tetrahydrofolate + glycine + H2O = (6S)-5,6,7,8-tetrahydrofolate + L-serine. It participates in one-carbon metabolism; tetrahydrofolate interconversion. It functions in the pathway amino-acid biosynthesis; glycine biosynthesis; glycine from L-serine: step 1/1. Its function is as follows. Catalyzes the reversible interconversion of serine and glycine with tetrahydrofolate (THF) serving as the one-carbon carrier. This reaction serves as the major source of one-carbon groups required for the biosynthesis of purines, thymidylate, methionine, and other important biomolecules. Also exhibits THF-independent aldolase activity toward beta-hydroxyamino acids, producing glycine and aldehydes, via a retro-aldol mechanism. This is Serine hydroxymethyltransferase from Bacillus velezensis (strain DSM 23117 / BGSC 10A6 / LMG 26770 / FZB42) (Bacillus amyloliquefaciens subsp. plantarum).